The chain runs to 159 residues: Type IV major alpha-pilin (159 aa).

The propeptide at 1 to 6 (MNAQKG) is leader sequence. The residue at position 7 (phenylalanine 7) is an N-methylphenylalanine. The helical transmembrane segment at 7-27 (FTLIELMIVIAIIGILAAIAL) threads the bilayer. The segment at 64–87 (VLSEESSTSKENIGLTSSETSTKP) is disordered. Over residues 67-87 (EESSTSKENIGLTSSETSTKP) the composition is skewed to polar residues. Cysteine 137 and cysteine 156 are disulfide-bonded.

This sequence belongs to the N-Me-Phe pilin family. In terms of assembly, major component of the type IV pilus (T4P) that plays a role in surface and attachment to the host epithelial tissues.

It localises to the fimbrium. It is found in the membrane. The protein is Type IV major alpha-pilin (tfpI) of Moraxella bovis.